Here is a 663-residue protein sequence, read N- to C-terminus: Alcohol oxidase 1 (663 aa).

8–38 (DILVLGGGSSGSCIAGRLANLDHSLKVGLIE) contacts FAD. His567 acts as the Proton acceptor in catalysis. A Microbody targeting signal motif is present at residues 661 to 663 (ARF).

This sequence belongs to the GMC oxidoreductase family. Homooctamer. The cofactor is FAD.

The protein resides in the peroxisome matrix. The enzyme catalyses a primary alcohol + O2 = an aldehyde + H2O2. It functions in the pathway energy metabolism; methane degradation. Major isoform of alcohol oxidase, which catalyzes the oxidation of methanol to formaldehyde and hydrogen peroxide, the first step in the methanol utilization pathway of methylotrophic yeasts. The sequence is that of Alcohol oxidase 1 (AOX1) from Komagataella phaffii (strain ATCC 76273 / CBS 7435 / CECT 11047 / NRRL Y-11430 / Wegner 21-1) (Yeast).